The chain runs to 146 residues: Large ribosomal subunit protein uL13 (146 aa).

The disordered stretch occupies residues Tyr-125–Gly-146.

It belongs to the universal ribosomal protein uL13 family. As to quaternary structure, part of the 50S ribosomal subunit.

Functionally, this protein is one of the early assembly proteins of the 50S ribosomal subunit, although it is not seen to bind rRNA by itself. It is important during the early stages of 50S assembly. The chain is Large ribosomal subunit protein uL13 from Roseiflexus sp. (strain RS-1).